We begin with the raw amino-acid sequence, 373 residues long: NADPH-dependent 3-keto-steroid reductase Hsd3b5 (373 aa).

Residues 10-15 (GAGGFL), tyrosine 155, and lysine 159 contribute to the NADP(+) site. Lysine 159 acts as the Proton donor in catalysis. Residues 288 to 308 (LSLLYWLAFLLETVSFLLRPV) traverse the membrane as a helical segment. Lysine 350 is modified (N6-acetyllysine).

Belongs to the 3-beta-HSD family. As to expression, expressed in the male liver, starting in late puberty.

Its subcellular location is the endoplasmic reticulum membrane. It localises to the mitochondrion membrane. It catalyses the reaction a 3beta-hydroxysteroid + NADP(+) = a 3-oxosteroid + NADPH + H(+). The enzyme catalyses 5alpha-androstane-3beta,17beta-diol + NADP(+) = 17beta-hydroxy-5alpha-androstan-3-one + NADPH + H(+). It functions in the pathway steroid metabolism. Functionally, responsible for the reduction of the oxo group on the C-3 of 5alpha-androstane steroids. Catalyzes the conversion of dihydrotestosterone to its inactive form 5alpha-androstanediol, that does not bind androgen receptor/AR. Does not function as an isomerase. The sequence is that of NADPH-dependent 3-keto-steroid reductase Hsd3b5 from Mus musculus (Mouse).